Here is a 337-residue protein sequence, read N- to C-terminus: MKNKDYPLRSSMDELSTKNDNEIDLEKGPLPEYNSEDESTLPPYSEIWKYIKTVSEDSSTGPTETTNPNVERRQEFKDSHPNIYSLLRLLISVLAVIVVFFTAWVCVNPLEKSIFGKVAFFVTIGITCPILLITIFCFFETWTQAVAQCIKVTVIFLAQCVKVTAVGLYNSREKWVVIIWLLWVVICYTLFLRSKFGNLNLNKALICSTCSISAALLLFLLYVRLPFWTLKHMFSGLFQVLGVQSCVVIVTKGLTYLFDKHIDATGYEIEASSLFVIGNFLFFYEMECPGALKRMPKFIRNGIASFLEGIGNIGRAFRGANDNNDIPLGEMEVESEV.

A compositionally biased stretch (basic and acidic residues) spans 1–29 (MKNKDYPLRSSMDELSTKNDNEIDLEKGP). The disordered stretch occupies residues 1 to 40 (MKNKDYPLRSSMDELSTKNDNEIDLEKGPLPEYNSEDEST). 6 helical membrane passes run 89 to 109 (LLISVLAVIVVFFTAWVCVNP), 119 to 139 (AFFVTIGITCPILLITIFCFF), 149 to 169 (CIKVTVIFLAQCVKVTAVGLY), 176 to 196 (VVIIWLLWVVICYTLFLRSKF), 210 to 230 (CSISAALLLFLLYVRLPFWTL), and 234 to 254 (FSGLFQVLGVQSCVVIVTKGL).

This sequence belongs to the WTF family. As to quaternary structure, homomer. Forms protein aggregates. The two isoforms can interact with each other and with themselves. High sequence similarity is required for their interaction.

Its subcellular location is the spore membrane. The protein resides in the vacuole membrane. It is found in the ascus epiplasm. It localises to the cytoplasm. The protein localises to the endoplasmic reticulum membrane. In terms of biological role, promotes unequal transmission of alleles from the parental zygote to progeny spores by acting as poison/antidote system where the poison and antidote proteins are produced from the same locus; the poison component is trans-acting and targets all spores within an ascus whereas the antidote component is spore-specific, leading to poisoning of all progeny that do not inherit the allele. Functionally, localizes isoform 2 to the vacuole thereby facilitating its degradation. Forms toxic aggregates that disrupt spore maturation. The chain is Meiotic driver wtf4 from Schizosaccharomyces kambucha (Fission yeast).